The primary structure comprises 129 residues: Small ribosomal subunit protein uS11 (129 aa).

This sequence belongs to the universal ribosomal protein uS11 family. In terms of assembly, part of the 30S ribosomal subunit. Interacts with proteins S7 and S18. Binds to IF-3.

Functionally, located on the platform of the 30S subunit, it bridges several disparate RNA helices of the 16S rRNA. Forms part of the Shine-Dalgarno cleft in the 70S ribosome. This chain is Small ribosomal subunit protein uS11, found in Rhizobium etli (strain CIAT 652).